Consider the following 200-residue polypeptide: Adenylate kinase (200 aa).

10 to 15 (GAGKGT) contacts ATP. The NMP stretch occupies residues 30 to 59 (STGDLFRANISQQTELGKLAKSYMDAGNLV). Residues Thr31, Arg36, 57-59 (NLV), 84-87 (GFPR), and Gln91 contribute to the AMP site. The segment at 125–163 (GRRVCRNDSAHVFHVTYTPPKKEGVCDVCGGELYQRDDD) is LID. ATP is bound by residues Arg126 and 136 to 137 (VF). AMP-binding residues include Arg160 and Arg171.

The protein belongs to the adenylate kinase family. As to quaternary structure, monomer.

It is found in the cytoplasm. The enzyme catalyses AMP + ATP = 2 ADP. The protein operates within purine metabolism; AMP biosynthesis via salvage pathway; AMP from ADP: step 1/1. In terms of biological role, catalyzes the reversible transfer of the terminal phosphate group between ATP and AMP. Plays an important role in cellular energy homeostasis and in adenine nucleotide metabolism. The chain is Adenylate kinase from Streptomyces lividans.